The following is a 359-amino-acid chain: MGSGIEVNDSSTTNSNNNEKVQLSYNMKLALATGGIMGSFLLYGILQERLMVVPYKNADGSEEYFTDSTFLVLSNRVFAALMAIVIVLKRGESLKNVAPLHKYVGVALSNFCATWCQYEALKYVNFPTQTLGKCGKMLPVMLVGTFISGKKYGLKDYSIALTITTGCMIFFLTGKISNNESSNTSYGIILMALYMFFDSFTSTFQEKMFKGYTMSTYDQMIYVNGCSSIISVFILILNGRLFPAIEFISTHNGVFFDSTMLSASAGLGQMVIYYTIKEFGALVFSTIMVTRQMVSIILSTLIYLHPLSNTQWIGALLVFGTLYYKSIEDSKKKHGGHSHGGSNAATTTTPSNNSNNTEK.

The next 7 helical transmembrane spans lie at Asn26–Leu46, Ser68–Leu88, Tyr157–Ser177, Thr184–Phe204, Ser228–Ile248, Val254–Ile276, and Thr300–Gly320. The tract at residues Lys332–Lys359 is disordered. The segment covering Gly340 to Lys359 has biased composition (low complexity).

The protein belongs to the nucleotide-sugar transporter family. SLC35B subfamily.

It is found in the golgi apparatus membrane. The enzyme catalyses 3'-phosphoadenylyl sulfate(in) + adenosine 3',5'-bisphosphate(out) = 3'-phosphoadenylyl sulfate(out) + adenosine 3',5'-bisphosphate(in). Its function is as follows. Probably functions as a 3'-phosphoadenylyl sulfate:adenosine 3',5'-bisphosphate antiporter at the Golgi membranes. Mediates the transport from the cytosol into the lumen of the Golgi of 3'-phosphoadenylyl sulfate/adenosine 3'-phospho 5'-phosphosulfate (PAPS), a universal sulfuryl donor for sulfation events that take place in that compartment. This is Adenosine 3'-phospho 5'-phosphosulfate transporter 1 (slc35b2) from Dictyostelium discoideum (Social amoeba).